The primary structure comprises 274 residues: N-acetylmuramic acid 6-phosphate etherase (274 aa).

The 164-residue stretch at 52–215 (IIPRMEQGGR…STSIMIRLGR (164 aa)) folds into the SIS domain. Glutamate 80 serves as the catalytic Proton donor. Glutamate 111 is an active-site residue.

This sequence belongs to the GCKR-like family. MurNAc-6-P etherase subfamily. As to quaternary structure, homodimer.

It catalyses the reaction N-acetyl-D-muramate 6-phosphate + H2O = N-acetyl-D-glucosamine 6-phosphate + (R)-lactate. It functions in the pathway amino-sugar metabolism; N-acetylmuramate degradation. In terms of biological role, specifically catalyzes the cleavage of the D-lactyl ether substituent of MurNAc 6-phosphate, producing GlcNAc 6-phosphate and D-lactate. This Porphyromonas gingivalis (strain ATCC BAA-308 / W83) protein is N-acetylmuramic acid 6-phosphate etherase.